Here is an 883-residue protein sequence, read N- to C-terminus: Integrator complex subunit 6-B (883 aa).

One can recognise a VWFA domain in the interval 3 to 227 (ILLFLLDTSA…QCLESLVQKI (225 aa)). The short motif at 626-633 (MMIDEADE) is the Inhibitory loop element.

Belongs to the Integrator subunit 6 family. Component of the Integrator complex, composed of core subunits INTS1, INTS2, INTS3, INTS4, INTS5, INTS6, INTS7, INTS8, INTS9/RC74, INTS10, INTS11/CPSF3L, INTS12, INTS13, INTS14 and INTS15. The core complex associates with protein phosphatase 2A subunits PPP2CA and PPP2R1A, to form the Integrator-PP2A (INTAC) complex.

The protein localises to the nucleus. It is found in the chromosome. Functionally, component of the integrator complex, a multiprotein complex that terminates RNA polymerase II (Pol II) transcription in the promoter-proximal region of genes. The integrator complex provides a quality checkpoint during transcription elongation by driving premature transcription termination of transcripts that are unfavorably configured for transcriptional elongation: the complex terminates transcription by (1) catalyzing dephosphorylation of the C-terminal domain (CTD) of Pol II subunit POLR2A/RPB1 and SUPT5H/SPT5, (2) degrading the exiting nascent RNA transcript via endonuclease activity and (3) promoting the release of Pol II from bound DNA. The integrator complex is also involved in terminating the synthesis of non-coding Pol II transcripts, such as enhancer RNAs (eRNAs), small nuclear RNAs (snRNAs), telomerase RNAs and long non-coding RNAs (lncRNAs). Within the integrator complex, INTS6 acts as a molecular adapter that promotes assembly of protein phosphatase 2A (PP2A) subunits to the integrator core complex, promoting recruitment of PP2A to transcription pause-release checkpoint. The polypeptide is Integrator complex subunit 6-B (ints6-b) (Xenopus laevis (African clawed frog)).